Here is a 352-residue protein sequence, read N- to C-terminus: Cysteinyl leukotriene receptor 1 (352 aa).

The Extracellular segment spans residues Met1 to Thr43. Residues Asn15, Asn19, and Asn26 are each glycosylated (N-linked (GlcNAc...) asparagine). A helical membrane pass occupies residues Met44–Ile64. Residues Lys65–Ala72 lie on the Cytoplasmic side of the membrane. Residues Phe73 to Leu93 traverse the membrane as a helical segment. Residues Arg94 to Asn121 lie on the Extracellular side of the membrane. The cysteines at positions 111 and 188 are disulfide-linked. A helical transmembrane segment spans residues Leu122–Phe142. The Cytoplasmic segment spans residues Pro143–Arg156. The helical transmembrane segment at Phe157–Lys177 threads the bilayer. Residues Ser178 to Ser208 are Extracellular-facing. N-linked (GlcNAc...) asparagine glycosylation occurs at Asn184. The helical transmembrane segment at Leu209–Leu229 threads the bilayer. At Thr230 to Lys245 the chain is on the cytoplasmic side. A helical transmembrane segment spans residues Ala246 to Ile266. The Extracellular portion of the chain corresponds to Gln267–Ser291. Residues Val292–Phe312 form a helical membrane-spanning segment. The Cytoplasmic segment spans residues Ser313–Glu352.

It belongs to the G-protein coupled receptor 1 family. In terms of tissue distribution, widely expressed, with higher expression in the lung and skin, intermediate levels in the heart, kidney and stomach and lower levels in several other tissues. Isoform 1 is the most abundant form in all tested tissues.

Its subcellular location is the cell membrane. Functionally, receptor for cysteinyl leukotrienes mediating constriction of the microvascular smooth muscle during an inflammatory response. This response is mediated via a G-protein that activates a phosphatidylinositol-calcium second messenger system. The rank order of affinities for the leukotrienes is LTD4 &gt;&gt; LTE4 = LTC4 &gt;&gt; LTB4. The polypeptide is Cysteinyl leukotriene receptor 1 (Cysltr1) (Mus musculus (Mouse)).